We begin with the raw amino-acid sequence, 116 residues long: Cell division protein FtsL (116 aa).

At 1 to 24 (MMLTNRQIRVRLFESLKNSFFKKT) the chain is on the cytoplasmic side. Residues 25-45 (VGISFALLFILLITAFSLIVV) form a helical membrane-spanning segment. The Periplasmic portion of the chain corresponds to 46 to 116 (RFEYKLQLNE…NEQKEELNNE (71 aa)).

Belongs to the FtsL family. As to quaternary structure, part of a complex composed of FtsB, FtsL and FtsQ.

It localises to the cell inner membrane. Functionally, essential cell division protein. May link together the upstream cell division proteins, which are predominantly cytoplasmic, with the downstream cell division proteins, which are predominantly periplasmic. The chain is Cell division protein FtsL from Francisella tularensis subsp. tularensis (strain SCHU S4 / Schu 4).